The sequence spans 177 residues: Transcriptional regulator MET31 (177 aa).

The C2H2-type zinc finger occupies tyrosine 95–histidine 117.

As to quaternary structure, interacts with MET4 and MET28.

The protein resides in the cytoplasm. Its subcellular location is the nucleus. Its function is as follows. Auxiliary transcriptional regulator of sulfur amino acid metabolism. Involved in the transcriptional activation of MET28. The sequence is that of Transcriptional regulator MET31 (MET31) from Saccharomyces cerevisiae (strain ATCC 204508 / S288c) (Baker's yeast).